Consider the following 338-residue polypeptide: Lipoate-protein ligase A (338 aa).

In terms of domain architecture, BPL/LPL catalytic spans 29 to 216; sequence PATQRVLFLW…AFFAHYGERV (188 aa). ATP contacts are provided by residues R71, 76–79, and K134; that span reads GAVF. K134 provides a ligand contact to (R)-lipoate.

This sequence belongs to the LplA family. In terms of assembly, monomer.

Its subcellular location is the cytoplasm. It carries out the reaction L-lysyl-[lipoyl-carrier protein] + (R)-lipoate + ATP = N(6)-[(R)-lipoyl]-L-lysyl-[lipoyl-carrier protein] + AMP + diphosphate + H(+). The protein operates within protein modification; protein lipoylation via exogenous pathway; protein N(6)-(lipoyl)lysine from lipoate: step 1/2. It functions in the pathway protein modification; protein lipoylation via exogenous pathway; protein N(6)-(lipoyl)lysine from lipoate: step 2/2. Catalyzes both the ATP-dependent activation of exogenously supplied lipoate to lipoyl-AMP and the transfer of the activated lipoyl onto the lipoyl domains of lipoate-dependent enzymes. The sequence is that of Lipoate-protein ligase A from Salmonella dublin (strain CT_02021853).